The primary structure comprises 254 residues: MSGYDRALSIFSPDGHIFQVEYALEAVKRGTCAVGVKGKNCVVLGCERRSTLKLQDTRITPSKVSKIDSHVVLSFSGLNADSRILIEKARVEAQSHRLTLEDPVTVEYLTRYVAGVQQRYTQSGGVRPFGVSTLIAGFDPRDDEPKLYQTEPSGIYSSWSAQTIGRNSKTVREFLEKNYDRKEPPATVEECVKLTVRSLLEVVQTGAKNIEITVVKPDSDIVALSSEEINQYVTQIEQEKQEQQEQDKKKKSNH.

Thr60 is modified (phosphothreonine). The tract at residues 235–254 (QIEQEKQEQQEQDKKKKSNH) is disordered. Basic and acidic residues predominate over residues 237–248 (EQEKQEQQEQDK).

This sequence belongs to the peptidase T1A family. As to quaternary structure, the 26S proteasome consists of a 20S proteasome core and two 19S regulatory subunits. The 20S proteasome core is composed of 28 subunits that are arranged in four stacked rings, resulting in a barrel-shaped structure. The two end rings are each formed by seven alpha subunits, and the two central rings are each formed by seven beta subunits. The catalytic chamber with the active sites is on the inside of the barrel. Interacts with CIC1.

Its subcellular location is the cytoplasm. It localises to the nucleus. Functionally, the proteasome degrades poly-ubiquitinated proteins in the cytoplasm and in the nucleus. It is essential for the regulated turnover of proteins and for the removal of misfolded proteins. The proteasome is a multicatalytic proteinase complex that is characterized by its ability to cleave peptides with Arg, Phe, Tyr, Leu, and Glu adjacent to the leaving group at neutral or slightly basic pH. It has an ATP-dependent proteolytic activity. This chain is Proteasome subunit alpha type-4 (PRE6), found in Saccharomyces cerevisiae (strain ATCC 204508 / S288c) (Baker's yeast).